A 929-amino-acid chain; its full sequence is SED5-binding protein 3 (929 aa).

Position 15 is a phosphoserine (S15). Polar residues predominate over residues 18–28 (ESTVHTGGASS). Residues 18-52 (ESTVHTGGASSKKSRRPHRAYHNFSSGTVPTLGNS) are disordered. A compositionally biased stretch (basic residues) spans 29-38 (KKSRRPHRAY). The segment covering 40–52 (NFSSGTVPTLGNS) has biased composition (polar residues). A Phosphothreonine modification is found at T72. S83, S85, S94, S101, and S110 each carry phosphoserine. At T216 the chain carries Phosphothreonine. Positions 220 to 244 (CRRCRAYANPKFQFTYDSSVICNIC) are zinc finger-like.

The protein belongs to the SEC23/SEC24 family. SEC24 subfamily. As to quaternary structure, COPII is composed of at least five proteins: the SEC23/24 complex, the SEC13/31 complex and SAR1. Binds to SED5. Interacts with GHR1.

It is found in the cytoplasm. It localises to the golgi apparatus membrane. Its subcellular location is the endoplasmic reticulum membrane. In terms of biological role, component of the COPII coat, that covers ER-derived vesicles involved in transport from the endoplasmic reticulum to the Golgi apparatus. COPII acts in the cytoplasm to promote the transport of secretory, plasma membrane, and vacuolar proteins from the endoplasmic reticulum to the Golgi complex. The protein is SED5-binding protein 3 (SFB3) of Saccharomyces cerevisiae (strain ATCC 204508 / S288c) (Baker's yeast).